The primary structure comprises 375 residues: Pectate lyase B (375 aa).

Positions 1 to 22 (MKSLITPIAAGLLLAFSQYSLA) are cleaved as a signal peptide. The cysteines at positions 93 and 176 are disulfide-linked. Ca(2+)-binding residues include aspartate 150, aspartate 152, glutamate 187, and aspartate 191. Residue arginine 240 is part of the active site. Cysteine 351 and cysteine 374 form a disulfide bridge.

This sequence belongs to the polysaccharide lyase 1 family. PLADES subfamily. It depends on Ca(2+) as a cofactor.

The protein localises to the secreted. It catalyses the reaction Eliminative cleavage of (1-&gt;4)-alpha-D-galacturonan to give oligosaccharides with 4-deoxy-alpha-D-galact-4-enuronosyl groups at their non-reducing ends.. The protein operates within glycan metabolism; pectin degradation; 2-dehydro-3-deoxy-D-gluconate from pectin: step 2/5. Functionally, involved in maceration and soft-rotting of plant tissue. In Dickeya chrysanthemi (Pectobacterium chrysanthemi), this protein is Pectate lyase B (pelB).